The following is a 742-amino-acid chain: MMGTAHHNQTAGSALGVGVGDANDAVPGAGGGGYSDPDGGPISGVQRPPQVCWERFIQKKTIKVLLVDSDDSTRQVVSALLRHCMYEVIPAENGQQAWTYLEDMQNSIDLVLTEVVMPGVSGISLLSRIMNHNICKNIPVIMMSSNDAMGTVFKCLSKGAVDFLVKPIRKNELKNLWQHVWRRCHSSSGSGSESGIQTQKCAKSKSGDESNNNSGSNDDDDDDGVIMGLNARDGSDNGSGTQAQSSWTKRAVEIDSPQAMSPDQLADPPDSTCAQVIHLKSDICSNRWLPCTSNKNSKKQKETNDDFKGKDLEIGSPRNLNTAYQSSPNERSIKPTDRRNEYPLQNNSKEAAMENLEESSVRAADLIGSMAKNMDAQQAARATNAPNCSSKVPEGKDKNRDNIMPSLELSLKRSRSTGDDANAIQEEQRNVLRRSDLSAFTRYHTPVASNQGGTGFVGSCSPHDNISEAMKTDSAYNMKSNSDAAPIKQGSNGSSNNNDMGSTTKNVVTKPSTNKERVMSPSAVKANGHTSAFHPAQHWTSPANTTGKEKTDEVANNAAKRAQPGEVQSNLVQHPRPILHYVHFDVSRENGGSGAPQCGSSNVFDPPVEGHAANYGVNGSNSGSNNGSNGQNGSTTAVNAERPNMEIANGTINKSGPGGGNGSGSGSGNDMYLKRFTQREHRVAAVIKFRQKRKERNFGKKVRYQSRKRLAEQRPRVRGQFVRQAVQDQQQQGGGREAAADR.

The region spanning 63 to 181 (KVLLVDSDDS…ELKNLWQHVW (119 aa)) is the Response regulatory domain. The segment covering 186–195 (SSSGSGSESG) has biased composition (low complexity). Disordered regions lie at residues 186–249 (SSSG…SWTK), 290–346 (PCTS…PLQN), 375–402 (DAQQ…NRDN), 478–570 (MKSN…VQSN), 590–671 (NGGS…GNDM), and 697–742 (NFGK…AADR). The segment covering 236-248 (DNGSGTQAQSSWT) has biased composition (polar residues). The span at 299–313 (KQKETNDDFKGKDLE) shows a compositional bias: basic and acidic residues. Over residues 318–330 (RNLNTAYQSSPNE) the composition is skewed to polar residues. Basic and acidic residues predominate over residues 331–341 (RSIKPTDRRNE). Over residues 380-390 (ARATNAPNCSS) the composition is skewed to polar residues. Residues 490-502 (GSNGSSNNNDMGS) show a composition bias toward low complexity. Over residues 503-512 (TTKNVVTKPS) the composition is skewed to polar residues. Residues 618 to 634 (NGSNSGSNNGSNGQNGS) are compositionally biased toward low complexity. Positions 656–667 (GPGGGNGSGSGS) are enriched in gly residues. Positions 682 to 724 (RVAAVIKFRQKRKERNFGKKVRYQSRKRLAEQRPRVRGQFVRQ) constitute a CCT domain. Positions 697-708 (NFGKKVRYQSRK) are enriched in basic residues. A compositionally biased stretch (low complexity) spans 719–731 (GQFVRQAVQDQQQ).

It belongs to the ARR-like family.

It localises to the nucleus. Its function is as follows. Controls photoperiodic flowering response. Seems to be one of the component of the circadian clock. Expression of several members of the ARR-like family is controlled by circadian rhythm. The particular coordinated sequential expression of PRR73, PRR37, PRR95, PRR59 and PPR1 result to circadian waves that may be at the basis of the endogenous circadian clock. In Oryza sativa subsp. indica (Rice), this protein is Two-component response regulator-like PRR37 (PRR37).